The following is a 334-amino-acid chain: Phospholipase A1 1 (334 aa).

An N-terminal signal peptide occupies residues 1–23 (MMNLKYLLFFCLVQALHYCYAYG). The propeptide occupies 24-33 (DPSLSNELDR). A disulfide bond links Cys37 and Cys120. Ser170 functions as the Nucleophile in the catalytic mechanism. Residue Asp198 is the Charge relay system of the active site. Cystine bridges form between Cys209–Cys214 and Cys252–Cys261. His263 functions as the Charge relay system in the catalytic mechanism. Disulfide bonds link Cys278–Cys302, Cys279–Cys327, and Cys295–Cys300.

It belongs to the AB hydrolase superfamily. Lipase family. Post-translationally, not glycosylated. Expressed by the venom gland.

Its subcellular location is the secreted. It carries out the reaction a 1,2-diacyl-sn-glycero-3-phosphocholine + H2O = a 2-acyl-sn-glycero-3-phosphocholine + a fatty acid + H(+). In terms of biological role, catalyzes the hydrolysis of phosphatidylcholine with phospholipase A1 activity (3.6 U/ml). May act as an allergen and induce hemolytic activity. In vivo, a mixture of this protein and Ves a 1.02 is able to paralyze crickets. This Vespa affinis (Lesser banded hornet) protein is Phospholipase A1 1.